Here is a 263-residue protein sequence, read N- to C-terminus: Ribosomal RNA small subunit methyltransferase A (263 aa).

S-adenosyl-L-methionine-binding residues include Ile-18, Gly-43, Glu-65, Asp-91, and Asn-110.

The protein belongs to the class I-like SAM-binding methyltransferase superfamily. rRNA adenine N(6)-methyltransferase family. RsmA subfamily.

The protein resides in the cytoplasm. The catalysed reaction is adenosine(1518)/adenosine(1519) in 16S rRNA + 4 S-adenosyl-L-methionine = N(6)-dimethyladenosine(1518)/N(6)-dimethyladenosine(1519) in 16S rRNA + 4 S-adenosyl-L-homocysteine + 4 H(+). Its function is as follows. Specifically dimethylates two adjacent adenosines (A1518 and A1519) in the loop of a conserved hairpin near the 3'-end of 16S rRNA in the 30S particle. May play a critical role in biogenesis of 30S subunits. In Ehrlichia chaffeensis (strain ATCC CRL-10679 / Arkansas), this protein is Ribosomal RNA small subunit methyltransferase A.